A 187-amino-acid polypeptide reads, in one-letter code: MSRIGKRPITVPKGVQVTIGEQNLVTVKGPKGTLTQKLHPDMIIKQEGDVITVQRPSDEKLHRSLHGLTRTLINNMIVGVTQGWQRALEINGVGYRAQLEGKTLVLNLGFSHPVRIEPPPNISYIVGERKSANDPLSLTVVGIDKQQVGEEAARIRSLRPPEPYKGKGIKYLEEKIRRKAGKAGKAK.

It belongs to the universal ribosomal protein uL6 family. Part of the 50S ribosomal subunit.

Its function is as follows. This protein binds to the 23S rRNA, and is important in its secondary structure. It is located near the subunit interface in the base of the L7/L12 stalk, and near the tRNA binding site of the peptidyltransferase center. This is Large ribosomal subunit protein uL6 from Chloroflexus aggregans (strain MD-66 / DSM 9485).